Reading from the N-terminus, the 364-residue chain is Dual-specificity RNA methyltransferase RlmN (364 aa).

The Proton acceptor role is filled by E91. Positions 97-333 (ESDRGTLCIS…VTVRKTRGDD (237 aa)) constitute a Radical SAM core domain. A disulfide bridge connects residues C104 and C338. Positions 111, 115, and 118 each coordinate [4Fe-4S] cluster. S-adenosyl-L-methionine contacts are provided by residues 164–165 (GE), S196, 218–220 (SLH), and N295. Catalysis depends on C338, which acts as the S-methylcysteine intermediate.

This sequence belongs to the radical SAM superfamily. RlmN family. It depends on [4Fe-4S] cluster as a cofactor.

Its subcellular location is the cytoplasm. It catalyses the reaction adenosine(2503) in 23S rRNA + 2 reduced [2Fe-2S]-[ferredoxin] + 2 S-adenosyl-L-methionine = 2-methyladenosine(2503) in 23S rRNA + 5'-deoxyadenosine + L-methionine + 2 oxidized [2Fe-2S]-[ferredoxin] + S-adenosyl-L-homocysteine. The enzyme catalyses adenosine(37) in tRNA + 2 reduced [2Fe-2S]-[ferredoxin] + 2 S-adenosyl-L-methionine = 2-methyladenosine(37) in tRNA + 5'-deoxyadenosine + L-methionine + 2 oxidized [2Fe-2S]-[ferredoxin] + S-adenosyl-L-homocysteine. In terms of biological role, specifically methylates position 2 of adenine 2503 in 23S rRNA and position 2 of adenine 37 in tRNAs. m2A2503 modification seems to play a crucial role in the proofreading step occurring at the peptidyl transferase center and thus would serve to optimize ribosomal fidelity. In Neisseria meningitidis serogroup C (strain 053442), this protein is Dual-specificity RNA methyltransferase RlmN.